We begin with the raw amino-acid sequence, 67 residues long: (2R)-sulfolactate sulfo-lyase subunit alpha (67 aa).

In terms of assembly, (2R)-sulfolactate sulfo-lyase is composed of a SuyA and a SuyB subunit.

Its subcellular location is the cytoplasm. It carries out the reaction (2R)-3-sulfolactate = sulfite + pyruvate + H(+). In terms of biological role, together with SuyB, desulfonates sulfolactate to pyruvate and sulfite. The chain is (2R)-sulfolactate sulfo-lyase subunit alpha (suyA) from Paracoccus pantotrophus (Thiosphaera pantotropha).